We begin with the raw amino-acid sequence, 198 residues long: Protein GrpE (198 aa).

The protein belongs to the GrpE family. Homodimer.

It localises to the cytoplasm. In terms of biological role, participates actively in the response to hyperosmotic and heat shock by preventing the aggregation of stress-denatured proteins, in association with DnaK and GrpE. It is the nucleotide exchange factor for DnaK and may function as a thermosensor. Unfolded proteins bind initially to DnaJ; upon interaction with the DnaJ-bound protein, DnaK hydrolyzes its bound ATP, resulting in the formation of a stable complex. GrpE releases ADP from DnaK; ATP binding to DnaK triggers the release of the substrate protein, thus completing the reaction cycle. Several rounds of ATP-dependent interactions between DnaJ, DnaK and GrpE are required for fully efficient folding. The polypeptide is Protein GrpE (Actinobacillus pleuropneumoniae serotype 5b (strain L20)).